A 932-amino-acid polypeptide reads, in one-letter code: UPF0182 protein Dred_1797 (932 aa).

The next 7 helical transmembrane spans lie at 11 to 31, 53 to 73, 118 to 138, 180 to 200, 209 to 229, 264 to 284, and 292 to 312; these read LVILAGALLFSLIGWGAGLYI, IGLRVLVGIIMFLLLLINLML, LTLAFTLLSMALGFLYSSSVA, ILASAIFLNIVLVALVYLVTD, IFRFPSARYHLSVLAALFFVI, YKALMILSLVTAIIIIANIFL, and YAIGGLLVTSILLGSVYPAII. Residues 861-883 are disordered; the sequence is DRPQQGVPPATDQPAGQQPAPEK.

This sequence belongs to the UPF0182 family.

Its subcellular location is the cell membrane. The sequence is that of UPF0182 protein Dred_1797 from Desulforamulus reducens (strain ATCC BAA-1160 / DSM 100696 / MI-1) (Desulfotomaculum reducens).